We begin with the raw amino-acid sequence, 209 residues long: Uracil phosphoribosyltransferase (209 aa).

Residues arginine 79, arginine 104, and 131–139 each bind 5-phospho-alpha-D-ribose 1-diphosphate; that span reads TPVVATANT. Residues isoleucine 194 and 199-201 contribute to the uracil site; that span reads GDA. Residue aspartate 200 participates in 5-phospho-alpha-D-ribose 1-diphosphate binding.

This sequence belongs to the UPRTase family. The cofactor is Mg(2+).

The catalysed reaction is UMP + diphosphate = 5-phospho-alpha-D-ribose 1-diphosphate + uracil. The protein operates within pyrimidine metabolism; UMP biosynthesis via salvage pathway; UMP from uracil: step 1/1. Its activity is regulated as follows. Allosterically activated by GTP. In terms of biological role, catalyzes the conversion of uracil and 5-phospho-alpha-D-ribose 1-diphosphate (PRPP) to UMP and diphosphate. The sequence is that of Uracil phosphoribosyltransferase from Bradyrhizobium diazoefficiens (strain JCM 10833 / BCRC 13528 / IAM 13628 / NBRC 14792 / USDA 110).